The chain runs to 130 residues: Con-Ins G2b (130 aa).

An N-terminal signal peptide occupies residues 1 to 23 (MTTSSYFLLVALGLLLYVRQSFS). 4 disulfide bridges follow: Cys-29–Cys-100, Cys-41–Cys-103, Cys-53–Cys-116, and Cys-102–Cys-107. Residue Pro-34 is modified to 4-hydroxyproline; partial. The tract at residues 54 to 77 (EEEEARRGGTNDGGKKRRRASPLR) is disordered. Residues 59 to 92 (RRGGTNDGGKKRRRASPLRKRRRFISMLKARAKR) constitute a propeptide, c peptide. The span at 68–77 (KKRRRASPLR) shows a compositional bias: basic residues. Glu-111 is subject to 4-carboxyglutamate; partial.

Belongs to the insulin family. In terms of assembly, heterodimer of A and B chains; disulfide-linked. Expressed by the venom gland.

Its subcellular location is the secreted. Functionally, this venom insulin, from a fish-hunting cone snail, facilitates prey capture by rapidly inducing hypoglycemic shock. Intraperitoneal injection of this peptide into zebrafish lowers blood glucose with the same potency than human insulin. In vivo, when applied to water, this peptide reduces overall locomotor activity of zebrafish larvae, observed as a significant decrease in the percentage of time spent swimming and movement frequency. This chain is Con-Ins G2b, found in Conus geographus (Geography cone).